The sequence spans 290 residues: Ciliary microtubule inner protein 6 (290 aa).

The interval 76–112 is disordered; the sequence is ENQGDWWPHGKGLENPFQPPYDTKSTQRSDFKKPTCP. Mn stretches follow at residues 128-160 and 213-246; these read GIVP…ARKT and SAES…IRVA. Positions 197-228 are disordered; sequence SGSCSSEQSKKTEKGNSAESKMISPGLCRQNS.

It is found in the cell projection. Its subcellular location is the cilium. In Bos taurus (Bovine), this protein is Ciliary microtubule inner protein 6 (CIMIP6).